A 308-amino-acid polypeptide reads, in one-letter code: Ornithine carbamoyltransferase (308 aa).

Carbamoyl phosphate contacts are provided by residues 56 to 59 (STRT), Gln83, Arg107, and 134 to 137 (HPCQ). L-ornithine contacts are provided by residues Asn165, Asp225, and 229–230 (SM). Carbamoyl phosphate contacts are provided by residues 266–267 (CL) and Arg294.

It belongs to the aspartate/ornithine carbamoyltransferase superfamily. OTCase family.

It is found in the cytoplasm. The catalysed reaction is carbamoyl phosphate + L-ornithine = L-citrulline + phosphate + H(+). The protein operates within amino-acid biosynthesis; L-arginine biosynthesis; L-arginine from L-ornithine and carbamoyl phosphate: step 1/3. In terms of biological role, reversibly catalyzes the transfer of the carbamoyl group from carbamoyl phosphate (CP) to the N(epsilon) atom of ornithine (ORN) to produce L-citrulline. The protein is Ornithine carbamoyltransferase of Ruegeria pomeroyi (strain ATCC 700808 / DSM 15171 / DSS-3) (Silicibacter pomeroyi).